Reading from the N-terminus, the 328-residue chain is Formimidoylglutamase (328 aa).

Residues His-133, Asp-159, His-161, Asp-163, Asp-253, and Asp-255 each contribute to the Mn(2+) site.

This sequence belongs to the arginase family. It depends on Mn(2+) as a cofactor.

The catalysed reaction is N-formimidoyl-L-glutamate + H2O = formamide + L-glutamate. It participates in amino-acid degradation; L-histidine degradation into L-glutamate; L-glutamate from N-formimidoyl-L-glutamate (hydrolase route): step 1/1. Catalyzes the conversion of N-formimidoyl-L-glutamate to L-glutamate and formamide. This is Formimidoylglutamase from Streptococcus pyogenes serotype M6 (strain ATCC BAA-946 / MGAS10394).